A 133-amino-acid polypeptide reads, in one-letter code: Histone H2A.Z (133 aa).

A compositionally biased stretch (basic residues) spans 1 to 11; the sequence is MSGKGKVHGGK. A disordered region spans residues 1 to 30; the sequence is MSGKGKVHGGKGKSSDSAKASTSHSARAGL. An N-acetylserine modification is found at Ser2. Residues Lys4, Lys11, and Lys13 each carry the N6-acetyllysine modification. Low complexity predominate over residues 15 to 26; the sequence is SDSAKASTSHSA.

It belongs to the histone H2A family. As to quaternary structure, the nucleosome is a histone octamer containing two molecules each of H2A, H2B, H3 and H4 assembled in one H3-H4 heterotetramer and two H2A-H2B heterodimers. The octamer wraps approximately 147 bp of DNA. H2A or its variant H2A.Z forms a heterodimer with H2B. H2A.Z associates with the VPS72/SWC2 subunit of the SWR1 chromatin remodeling complex. Also interacts with RBP1/DNA-directed RNA polymerase II largest subunit. Post-translationally, acetylated once deposited into chromatin.

The protein resides in the nucleus. Its subcellular location is the chromosome. Variant histone H2A which can replace H2A in some nucleosomes. Nucleosomes wrap and compact DNA into chromatin, limiting DNA accessibility to the cellular machineries which require DNA as a template. Histones thereby play a central role in transcription regulation, DNA repair, DNA replication and chromosomal stability. DNA accessibility is regulated via a complex set of post-translational modifications of histones, also called histone code, and nucleosome remodeling. This variant is enriched at promoters, it may keep them in a repressed state until the appropriate activation signal is received. Near telomeres, it may counteract gene silencing caused by the spread of heterochromatin proteins. Required for the RNA polymerase II and SPT15/TBP recruitment to the target genes. Involved in chromosome stability. The polypeptide is Histone H2A.Z (HTZ1) (Meyerozyma guilliermondii (strain ATCC 6260 / CBS 566 / DSM 6381 / JCM 1539 / NBRC 10279 / NRRL Y-324) (Yeast)).